Here is a 133-residue protein sequence, read N- to C-terminus: Norrin (133 aa).

The signal sequence occupies residues methionine 1–serine 24. Intrachain disulfides connect cysteine 39–cysteine 96, cysteine 55–cysteine 110, cysteine 65–cysteine 126, and cysteine 69–cysteine 128. One can recognise a CTCK domain in the interval cysteine 39–asparagine 132.

As to quaternary structure, homodimer; disulfide-linked. Component of a complex, at least composed of TSPAN12, FZD4, LRP5/6 and norrin (NDP). Binds FZD4 with high affinity. Interacts with LRP6 (via Beta-propellers 1 and 2). In terms of tissue distribution, expressed in the outer nuclear, inner nuclear and ganglion cell layers of the retina, and in fetal and adult brain.

The protein resides in the secreted. Activates the canonical Wnt signaling pathway through FZD4 and LRP5 coreceptor. Plays a central role in retinal vascularization by acting as a ligand for FZD4 that signals via stabilizing beta-catenin (CTNNB1) and activating LEF/TCF-mediated transcriptional programs. Acts in concert with TSPAN12 to activate FZD4 independently of the Wnt-dependent activation of FZD4, suggesting the existence of a Wnt-independent signaling that also promote accumulation the beta-catenin (CTNNB1). May be involved in a pathway that regulates neural cell differentiation and proliferation. Possible role in neuroectodermal cell-cell interaction. This Homo sapiens (Human) protein is Norrin (NDP).